The primary structure comprises 339 residues: Casein kinase II subunit alpha' (339 aa).

In terms of domain architecture, Protein kinase spans 50–334; sequence YEIINKIGRG…AKEAMDHKFF (285 aa). ATP contacts are provided by residues 56–64 and lysine 79; that span reads IGRGKYSEV. Aspartate 167 functions as the Proton acceptor in the catalytic mechanism.

This sequence belongs to the protein kinase superfamily. Ser/Thr protein kinase family. CK2 subfamily. Tetramer composed of an alpha chain, an alpha', one beta chain and one beta' chain. Interacts with FACT subunits POB3 and SPT16. Interacts with NAP1. Interacts with YTA7.

The catalysed reaction is L-seryl-[protein] + ATP = O-phospho-L-seryl-[protein] + ADP + H(+). It carries out the reaction L-threonyl-[protein] + ATP = O-phospho-L-threonyl-[protein] + ADP + H(+). Catalytic subunit of a constitutively active serine/threonine-protein kinase complex that phosphorylates a large number of substrates containing acidic residues C-terminal to the phosphorylated serine or threonine. Phosphorylates YTA7 during S-phase to promote transcription of histones. In Saccharomyces cerevisiae (strain ATCC 204508 / S288c) (Baker's yeast), this protein is Casein kinase II subunit alpha'.